A 153-amino-acid polypeptide reads, in one-letter code: MASMRTSSMSLLLLLSLVALVKAGVIIPQSPGCPPTEDKNFPQHVRVNLNIVNRSTNSRRPTDYHKRSTSPWTLHRNEDPERYPSVIWEAKCSHSGCINAEGKVDHHMNSVTIQQEILVLRRESQHCPHSFRLEKMLVAVGCTCVTPIVRHLA.

The first 23 residues, 1 to 23, serve as a signal peptide directing secretion; the sequence is MASMRTSSMSLLLLLSLVALVKA. Asparagine 53 carries N-linked (GlcNAc...) asparagine glycosylation. Positions 56-76 are disordered; that stretch reads TNSRRPTDYHKRSTSPWTLHR. 2 cysteine pairs are disulfide-bonded: cysteine 92–cysteine 142 and cysteine 97–cysteine 144.

This sequence belongs to the IL-17 family. Homodimer. Forms complexes with IL17RA and IL17RC receptors with 2:1 binding stoichiometry: two receptor chains for one interleukin molecule. IL17A homodimer preferentially drives the formation of IL17RA-IL17RC heterodimeric receptor complex. IL17A homodimer adopts an asymmetrical ternary structure with one IL17RA molecule, allowing for high affinity interactions of one IL17A monomer with one IL17RA molecule (via D1 and D2 domains), while disfavoring binding of a second IL17RA molecule on the other IL17A monomer. Heterodimer with IL17F. IL17A-IL17F forms complexes with IL17RA-IL17RC, but with lower affinity when compared to IL17A homodimer. IL17RA and IL17RC chains cannot distinguish between IL17A and IL17F molecules, potentially enabling the formation of topologically distinct complexes.

Its subcellular location is the secreted. Effector cytokine of innate and adaptive immune system involved in antimicrobial host defense and maintenance of tissue integrity. Signals via IL17RA-IL17RC heterodimeric receptor complex, triggering homotypic interaction of IL17RA and IL17RC chains with TRAF3IP2 adapter. This leads to downstream TRAF6-mediated activation of NF-kappa-B and MAPkinase pathways ultimately resulting in transcriptional activation of cytokines, chemokines, antimicrobial peptides and matrix metalloproteinases, with potential strong immune inflammation. Plays an important role in connecting T cell-mediated adaptive immunity and acute inflammatory response to destroy extracellular bacteria and fungi. As a signature effector cytokine of T-helper 17 cells (Th17), primarily induces neutrophil activation and recruitment at infection and inflammatory sites. In airway epithelium, mediates neutrophil chemotaxis via induction of CXCL1 and CXCL5 chemokines. In secondary lymphoid organs, contributes to germinal center formation by regulating the chemotactic response of B cells to CXCL12 and CXCL13, enhancing retention of B cells within the germinal centers, B cell somatic hypermutation rate and selection toward plasma cells. Effector cytokine of a subset of gamma-delta T cells that functions as part of an inflammatory circuit downstream IL1B, TLR2 and IL23A-IL12B to promote neutrophil recruitment for efficient bacterial clearance. Effector cytokine of innate immune cells including invariant natural killer cell (iNKT) and group 3 innate lymphoid cells that mediate initial neutrophilic inflammation. Involved in the maintenance of the integrity of epithelial barriers during homeostasis and pathogen infection. Upon acute injury, has a direct role in epithelial barrier formation by regulating OCLN localization and tight junction biogenesis. As part of the mucosal immune response induced by commensal bacteria, enhances host's ability to resist pathogenic bacterial and fungal infections by promoting neutrophil recruitment and antimicrobial peptides release. In synergy with IL17F, mediates the production of antimicrobial beta-defensins DEFB1, DEFB103A, and DEFB104A by mucosal epithelial cells, limiting the entry of microbes through the epithelial barriers. Involved in antiviral host defense through various mechanisms. Enhances immunity against West Nile virus by promoting T cell cytotoxicity. May play a beneficial role in influenza A virus (H5N1) infection by enhancing B cell recruitment and immune response in the lung. Contributes to influenza A virus (H1N1) clearance by driving the differentiation of B-1a B cells, providing for production of virus-specific IgM antibodies at first line of host defense. The chain is Interleukin-17A (IL17A) from Bos taurus (Bovine).